Here is a 382-residue protein sequence, read N- to C-terminus: Secreted triacylglycerol lipase LIP5 (382 aa).

The cysteines at positions 40 and 211 are disulfide-linked. Residue Asn-115 is glycosylated (N-linked (GlcNAc...) asparagine). Ser-124 (nucleophile) is an active-site residue. N-linked (GlcNAc...) asparagine glycans are attached at residues Asn-157 and Asn-232. Catalysis depends on residues Asp-271 and His-305. Asn-346 is a glycosylation site (N-linked (GlcNAc...) asparagine).

It belongs to the AB hydrolase superfamily. Lipase family. Class Lip subfamily.

Its subcellular location is the secreted. It carries out the reaction a triacylglycerol + H2O = a diacylglycerol + a fatty acid + H(+). The catalysed reaction is a monoacylglycerol + H2O = glycerol + a fatty acid + H(+). It catalyses the reaction a diacylglycerol + H2O = a monoacylglycerol + a fatty acid + H(+). Functionally, secreted lipase that hydrolyzes acylglycerol lipids such as triacylglycerols and consequently releases free fatty acid. Can hydrolyze 4-nitrophenyl palmitate to release 4-nitrophenol and palmitoic acid. Due to an absence of fatty acid synthase genes in Malassezia species, secretory lipases are essential for the yeast to generate free fatty acids from degradation of sebum and assimilate them as lipid sources for growth. Plays important roles not only in lipid metabolism but also in the immune response of host cells and pathogenesis. This chain is Secreted triacylglycerol lipase LIP5, found in Malassezia furfur (Pityriasis versicolor infection agent).